Here is a 270-residue protein sequence, read N- to C-terminus: Phosphatidylinositol transfer protein alpha isoform (270 aa).

A 1,2-diacyl-sn-glycero-3-phospho-(1D-myo-inositol) contacts are provided by Thr58, Lys60, Glu85, Asn89, Thr96, and Lys194. Position 215 is an N6-acetyllysine (Lys215). Basic and acidic residues predominate over residues 250–263 (TKRQLDEMRQKDPV). Residues 250–270 (TKRQLDEMRQKDPVKGMTADD) form a disordered region.

It belongs to the PtdIns transfer protein family. PI transfer class I subfamily.

Its subcellular location is the cytoplasm. It is found in the nucleus. It carries out the reaction a 1,2-diacyl-sn-glycero-3-phosphocholine(in) = a 1,2-diacyl-sn-glycero-3-phosphocholine(out). The enzyme catalyses a 1,2-diacyl-sn-glycero-3-phospho-(1D-myo-inositol)(in) = a 1,2-diacyl-sn-glycero-3-phospho-(1D-myo-inositol)(out). Its activity is regulated as follows. Phosphatidylinositol transfer activity is inhibited by N-ethylmaleimide. Its function is as follows. Catalyzes the transfer of phosphatidylinositol (PI) and phosphatidylcholine (PC) between membranes. Shows a preference for PI and PC containing shorter saturated or monosaturated acyl chains at the sn-1 and sn-2 positions. Preference order for PC is C16:1 &gt; C16:0 &gt; C18:1 &gt; C18:0 &gt; C20:4 and for PI is C16:1 &gt; C16:0 &gt; C18:1 &gt; C18:0 &gt; C20:4 &gt; C20:3. This chain is Phosphatidylinositol transfer protein alpha isoform (PITPNA), found in Homo sapiens (Human).